Consider the following 425-residue polypeptide: Gamma-glutamyl phosphate reductase (425 aa).

This sequence belongs to the gamma-glutamyl phosphate reductase family.

The protein resides in the cytoplasm. It carries out the reaction L-glutamate 5-semialdehyde + phosphate + NADP(+) = L-glutamyl 5-phosphate + NADPH + H(+). It functions in the pathway amino-acid biosynthesis; L-proline biosynthesis; L-glutamate 5-semialdehyde from L-glutamate: step 2/2. Functionally, catalyzes the NADPH-dependent reduction of L-glutamate 5-phosphate into L-glutamate 5-semialdehyde and phosphate. The product spontaneously undergoes cyclization to form 1-pyrroline-5-carboxylate. In Xylella fastidiosa (strain M23), this protein is Gamma-glutamyl phosphate reductase.